The chain runs to 162 residues: Dihydrofolate reductase (162 aa).

The region spanning 3 to 161 (KITLIAACAE…TSYAFVHYLR (159 aa)) is the DHFR domain. 7-9 (IAA) contributes to the substrate binding site. NADP(+)-binding positions include 8–9 (AA) and 16–21 (IGAGNA). D29 contacts substrate. Residue 45 to 48 (GRKT) coordinates NADP(+). A substrate-binding site is contributed by R60. Residues 65 to 68 (ISRQ) and 98 to 103 (MGGAQI) contribute to the NADP(+) site. T117 contacts substrate.

Belongs to the dihydrofolate reductase family.

The catalysed reaction is (6S)-5,6,7,8-tetrahydrofolate + NADP(+) = 7,8-dihydrofolate + NADPH + H(+). Its pathway is cofactor biosynthesis; tetrahydrofolate biosynthesis; 5,6,7,8-tetrahydrofolate from 7,8-dihydrofolate: step 1/1. Its function is as follows. Key enzyme in folate metabolism. Catalyzes an essential reaction for de novo glycine and purine synthesis, and for DNA precursor synthesis. The protein is Dihydrofolate reductase (folA) of Neisseria meningitidis serogroup A / serotype 4A (strain DSM 15465 / Z2491).